The following is a 120-amino-acid chain: Phosphoribosyl-ATP pyrophosphatase (120 aa).

The protein belongs to the PRA-PH family.

Its subcellular location is the cytoplasm. The enzyme catalyses 1-(5-phospho-beta-D-ribosyl)-ATP + H2O = 1-(5-phospho-beta-D-ribosyl)-5'-AMP + diphosphate + H(+). It functions in the pathway amino-acid biosynthesis; L-histidine biosynthesis; L-histidine from 5-phospho-alpha-D-ribose 1-diphosphate: step 2/9. This is Phosphoribosyl-ATP pyrophosphatase from Methylibium petroleiphilum (strain ATCC BAA-1232 / LMG 22953 / PM1).